Reading from the N-terminus, the 154-residue chain is Myoglobin (154 aa).

Positions 2–148 constitute a Globin domain; sequence GLSDGEWQLV…FRNDIAAKYK (147 aa). At serine 4 the chain carries Phosphoserine. Histidine 65 contributes to the nitrite binding site. Residue histidine 65 coordinates O2. Threonine 68 carries the post-translational modification Phosphothreonine. Residue histidine 94 coordinates heme b.

Belongs to the globin family. Monomeric.

The protein localises to the cytoplasm. It localises to the sarcoplasm. The catalysed reaction is Fe(III)-heme b-[protein] + nitric oxide + H2O = Fe(II)-heme b-[protein] + nitrite + 2 H(+). It catalyses the reaction H2O2 + AH2 = A + 2 H2O. Monomeric heme protein which primary function is to store oxygen and facilitate its diffusion within muscle tissues. Reversibly binds oxygen through a pentacoordinated heme iron and enables its timely and efficient release as needed during periods of heightened demand. Depending on the oxidative conditions of tissues and cells, and in addition to its ability to bind oxygen, it also has a nitrite reductase activity whereby it regulates the production of bioactive nitric oxide. Under stress conditions, like hypoxia and anoxia, it also protects cells against reactive oxygen species thanks to its pseudoperoxidase activity. The protein is Myoglobin (MB) of Sciurus vulgaris (Eurasian red squirrel).